Here is a 364-residue protein sequence, read N- to C-terminus: L-carnitine dehydrogenase (364 aa).

11 to 16 (GGGVIG) is a binding site for NAD(+). The disordered stretch occupies residues 336–364 (KPAASTAAEKAKASKPVKKAEKPKKKKKG). Residues 348–364 (ASKPVKKAEKPKKKKKG) are compositionally biased toward basic residues.

It belongs to the 3-hydroxyacyl-CoA dehydrogenase family. L-carnitine dehydrogenase subfamily. Homodimer.

Its subcellular location is the cytoplasm. The catalysed reaction is carnitine + NAD(+) = 3-dehydrocarnitine + NADH + H(+). It functions in the pathway amine and polyamine metabolism; carnitine metabolism. In terms of biological role, catalyzes the NAD(+)-dependent oxidation of L-carnitine to 3-dehydrocarnitine. The polypeptide is L-carnitine dehydrogenase (Mesorhizobium japonicum (strain LMG 29417 / CECT 9101 / MAFF 303099) (Mesorhizobium loti (strain MAFF 303099))).